A 206-amino-acid polypeptide reads, in one-letter code: Small ribosomal subunit protein uS4 (206 aa).

The region spanning 93–156 (CRLDNLVYRL…RKIKIIAEAL (64 aa)) is the S4 RNA-binding domain.

The protein belongs to the universal ribosomal protein uS4 family. As to quaternary structure, part of the 30S ribosomal subunit. Contacts protein S5. The interaction surface between S4 and S5 is involved in control of translational fidelity.

In terms of biological role, one of the primary rRNA binding proteins, it binds directly to 16S rRNA where it nucleates assembly of the body of the 30S subunit. Its function is as follows. With S5 and S12 plays an important role in translational accuracy. The protein is Small ribosomal subunit protein uS4 of Protochlamydia amoebophila (strain UWE25).